The primary structure comprises 227 residues: Isopentenyl-diphosphate Delta-isomerase 1 (227 aa).

A substrate-binding site is contributed by K36. Residues H40 and H51 each contribute to the Mg(2+) site. The Nudix hydrolase domain occupies 49–199 (LLHRAFSVFL…EIKITPWFQI (151 aa)). Residues R70 and K74 each coordinate substrate. Catalysis depends on C86, which acts as the Proton acceptor. Residue S87 participates in substrate binding. Mg(2+)-binding residues include E146 and E148. E148 is a catalytic residue. K176 is modified (N6-acetyllysine).

This sequence belongs to the IPP isomerase type 1 family. In terms of assembly, monomer. Mg(2+) serves as cofactor.

The protein localises to the peroxisome. It catalyses the reaction isopentenyl diphosphate = dimethylallyl diphosphate. It participates in isoprenoid biosynthesis; dimethylallyl diphosphate biosynthesis; dimethylallyl diphosphate from isopentenyl diphosphate: step 1/1. Its function is as follows. Catalyzes the 1,3-allylic rearrangement of the homoallylic substrate isopentenyl (IPP) to its highly electrophilic allylic isomer, dimethylallyl diphosphate (DMAPP). The protein is Isopentenyl-diphosphate Delta-isomerase 1 (IDI1) of Bos taurus (Bovine).